The chain runs to 420 residues: MSNNNNNNNNNNDEENSKLDIVKKQFQEKEKQRLQSKLEKREISNKEQIDQSSSNIASETLLLINNLSDDIENRLNEISNNTNENKAEDLKESYNQMEESLSEINSITTMSSHILTSYDVKSILENIDNLRKQIDKSKEKYMPKQKLSLTRKKTKTTTVSTKTTSSKEDTNETFNNNNNNNNDNDNTDNNNNKISTEPIFNLINIKGFKNKELFYPPKKEEEIGNQDINNNNNNNNNNNNNNNNNNNNNNNNNNNNNNSNSINDLFISDLTDCTVILDMKVLTALKINNLVNCKIRANSPIDGSIFIDNCINSIFSLVSRQIRIHYCTDCQFNIFVKSNPIIEGSKQIKFSSYLQNLKQQQQQQQQQEQEKVLSSFDNKRFKEYSFDLESNNIDSDKWKLVNDFDWIQQKQSPNWSLVEY.

Residues 9–142 are a coiled coil; that stretch reads NNNNDEENSK…QIDKSKEKYM (134 aa). Residues 31–49 are compositionally biased toward basic and acidic residues; it reads KQRLQSKLEKREISNKEQI. 3 disordered regions span residues 31 to 52, 138 to 193, and 222 to 257; these read KQRLQSKLEKREISNKEQIDQS, KEKY…NNNK, and EIGNQDINNNNNNNNNNNNNNNNNNNNNNNNNNNNN. Composition is skewed to low complexity over residues 172-192 and 228-257; these read ETFNNNNNNNNDNDNTDNNNN and INNNNNNNNNNNNNNNNNNNNNNNNNNNNN. In terms of domain architecture, C-CAP/cofactor C-like spans 216–366; it reads PPKKEEEIGN…LKQQQQQQQQ (151 aa).

It belongs to the TBCC family. As to quaternary structure, supercomplex made of cofactors A to E. Cofactors A and D function by capturing and stabilizing tubulin in a quasi-native conformation. Cofactor E binds to the cofactor D-tubulin complex; interaction with cofactor C then causes the release of tubulin polypeptides that are committed to the native state.

Functionally, tubulin-folding protein; involved in the final step of the tubulin folding pathway. This is Tubulin-specific chaperone C (tbcc) from Dictyostelium discoideum (Social amoeba).